A 356-amino-acid polypeptide reads, in one-letter code: 5-amino-6-(D-ribitylamino)uracil--L-tyrosine 4-hydroxyphenyl transferase (356 aa).

Positions 47-281 constitute a Radical SAM core domain; the sequence is VTYIVNRNIN…AIARILLNTH (235 aa). Residues Cys61, Cys65, and Cys68 each coordinate [4Fe-4S] cluster.

Belongs to the radical SAM superfamily. CofH family. In terms of assembly, consists of two subunits, CofG and CofH. It depends on [4Fe-4S] cluster as a cofactor.

The catalysed reaction is 5-amino-6-(D-ribitylamino)uracil + L-tyrosine + S-adenosyl-L-methionine = 5-amino-5-(4-hydroxybenzyl)-6-(D-ribitylimino)-5,6-dihydrouracil + 2-iminoacetate + 5'-deoxyadenosine + L-methionine + H(+). Its pathway is cofactor biosynthesis; coenzyme F0 biosynthesis. In terms of biological role, catalyzes the radical-mediated synthesis of 5-amino-5-(4-hydroxybenzyl)-6-(D-ribitylimino)-5,6-dihydrouracil from 5-amino-6-(D-ribitylamino)uracil and L-tyrosine. In Methanococcoides burtonii (strain DSM 6242 / NBRC 107633 / OCM 468 / ACE-M), this protein is 5-amino-6-(D-ribitylamino)uracil--L-tyrosine 4-hydroxyphenyl transferase.